A 512-amino-acid polypeptide reads, in one-letter code: MSQNKLAALIILDGFAIRDEVKGNAVKQANTPNFDRFWNQYAHNQLEASGKAVGLPDGQMGNSEVGHLNIGAGRIVYQSLTRVNVSIDEGDFYEVDAFIKSVEHAKKHDKALHLFGLLSDGGVHSHINHLFALLRLAKKHELENVFVHAFLDGRDVGPKTASKYIKETQDVMDELGVGQFATISGRYYSMDRDKRWDRVKKCYDAMVYGEGPSYKSAQEVVDDNYANEIYDEFVIPSVITDDNDEPVATIKDEDSIIFYNFRPDRAIQISRTFANEDFRDFERGDKAPKKLDFVMLTNFSETVDGYVAYQPVNLDNTVGEVLAQNNLNQLRIAETEKYPHVTFFMSGGREKEFPGEKRILIDSPKVATYDLKPEMSVYEVTDALLKELDKGEQNAIILNFANPDMVGHSGKLQPTIDAIEAVDECLGKVIDKITELGGHAIITADHGNSDEVMTLEDKPMTAHTTNPVPVIVTKDDIELRDGGILADLSPTLLDLLNVEKPKEMTGNSLIKK.

The Mn(2+) site is built by Asp-13 and Ser-63. Ser-63 (phosphoserine intermediate) is an active-site residue. Substrate is bound by residues His-124, 154 to 155, Arg-186, Arg-192, 262 to 265, and Lys-337; these read RD and RPDR. 5 residues coordinate Mn(2+): Asp-404, His-408, Asp-445, His-446, and His-463.

It belongs to the BPG-independent phosphoglycerate mutase family. Monomer. Mn(2+) serves as cofactor.

The catalysed reaction is (2R)-2-phosphoglycerate = (2R)-3-phosphoglycerate. It functions in the pathway carbohydrate degradation; glycolysis; pyruvate from D-glyceraldehyde 3-phosphate: step 3/5. In terms of biological role, essential for rapid growth and for sporulation. Catalyzes the interconversion of 2-phosphoglycerate and 3-phosphoglycerate. The polypeptide is 2,3-bisphosphoglycerate-independent phosphoglycerate mutase (Oceanobacillus iheyensis (strain DSM 14371 / CIP 107618 / JCM 11309 / KCTC 3954 / HTE831)).